The primary structure comprises 503 residues: Na(+)-translocating NADH-quinone reductase subunit B (503 aa).

The next 5 helical transmembrane spans lie at 55 to 75 (MMLV…NSGL), 94 to 114 (ISGF…VPIL), 120 to 140 (IFIP…VLFA), 161 to 181 (TLPP…GIVV), and 186 to 206 (FGGT…FLFF). An FMN phosphoryl threonine modification is found at Thr-248. 5 helical membrane-spanning segments follow: residues 361–381 (TSTF…IASW), 386–406 (AFGI…VLIV), 417–437 (FFIP…LVFM), 452–472 (WIYG…NPAY), and 475–495 (GVML…YFAV).

It belongs to the NqrB/RnfD family. As to quaternary structure, composed of six subunits; NqrA, NqrB, NqrC, NqrD, NqrE and NqrF. FMN is required as a cofactor.

It localises to the cell inner membrane. The enzyme catalyses a ubiquinone + n Na(+)(in) + NADH + H(+) = a ubiquinol + n Na(+)(out) + NAD(+). NQR complex catalyzes the reduction of ubiquinone-1 to ubiquinol by two successive reactions, coupled with the transport of Na(+) ions from the cytoplasm to the periplasm. NqrA to NqrE are probably involved in the second step, the conversion of ubisemiquinone to ubiquinol. The chain is Na(+)-translocating NADH-quinone reductase subunit B from Chlamydia pneumoniae (Chlamydophila pneumoniae).